Consider the following 423-residue polypeptide: Pseudouridylate synthase 1 homolog (423 aa).

Residues 32–75 form a disordered region; sequence AGNKVPPALASHQPDRKGRGGWVWEETEHPAKRVKGGEDEEPPR. The segment covering 57–68 has biased composition (basic and acidic residues); the sequence is ETEHPAKRVKGG. D142 functions as the Nucleophile in the catalytic mechanism. The disordered stretch occupies residues 403-423; it reads ADTGAKVPSSLEGSEGDGDTD. Phosphoserine occurs at positions 411 and 416. A Phosphothreonine modification is found at T422.

It belongs to the tRNA pseudouridine synthase TruA family. Monomer. Forms a complex with RARG and the SRA1 RNA in the nucleus.

Its subcellular location is the nucleus. It is found in the cytoplasm. The protein localises to the mitochondrion. It catalyses the reaction a uridine in tRNA = a pseudouridine in tRNA. It carries out the reaction uridine(38/39/40) in tRNA = pseudouridine(38/39/40) in tRNA. The catalysed reaction is a uridine in mRNA = a pseudouridine in mRNA. Pseudouridylate synthase that catalyzes pseudouridylation of tRNAs and mRNAs. Acts on positions 27/28 in the anticodon stem and also positions 34 and 36 in the anticodon of an intron containing tRNA. Also catalyzes pseudouridylation of mRNAs: mediates pseudouridylation of mRNAs with the consensus sequence 5'-UGUAG-3'. Acts as a regulator of pre-mRNA splicing by mediating pseudouridylation of pre-mRNAs at locations associated with alternatively spliced regions. Pseudouridylation of pre-mRNAs near splice sites directly regulates mRNA splicing and mRNA 3'-end processing. Involved in regulation of nuclear receptor activity through pseudouridylation of SRA1 mRNA. In terms of biological role, does not form pseudouridine when expressed in vitro. This chain is Pseudouridylate synthase 1 homolog, found in Mus musculus (Mouse).